Here is a 158-residue protein sequence, read N- to C-terminus: RNA pyrophosphohydrolase (158 aa).

The 145-residue stretch at 8 to 152 folds into the Nudix hydrolase domain; that stretch reads PYRPCAGVML…KRALYRGLIE (145 aa). A Nudix box motif is present at residues 42–63; that stretch reads GGIDEGEDAEKAAIRELGEETG.

It belongs to the Nudix hydrolase family. RppH subfamily. It depends on a divalent metal cation as a cofactor.

In terms of biological role, accelerates the degradation of transcripts by removing pyrophosphate from the 5'-end of triphosphorylated RNA, leading to a more labile monophosphorylated state that can stimulate subsequent ribonuclease cleavage. The sequence is that of RNA pyrophosphohydrolase from Sphingopyxis alaskensis (strain DSM 13593 / LMG 18877 / RB2256) (Sphingomonas alaskensis).